The primary structure comprises 361 residues: UDP-3-O-acylglucosamine N-acyltransferase (361 aa).

His-258 acts as the Proton acceptor in catalysis.

This sequence belongs to the transferase hexapeptide repeat family. LpxD subfamily. Homotrimer.

It carries out the reaction a UDP-3-O-[(3R)-3-hydroxyacyl]-alpha-D-glucosamine + a (3R)-hydroxyacyl-[ACP] = a UDP-2-N,3-O-bis[(3R)-3-hydroxyacyl]-alpha-D-glucosamine + holo-[ACP] + H(+). It functions in the pathway bacterial outer membrane biogenesis; LPS lipid A biosynthesis. Functionally, catalyzes the N-acylation of UDP-3-O-acylglucosamine using 3-hydroxyacyl-ACP as the acyl donor. Is involved in the biosynthesis of lipid A, a phosphorylated glycolipid that anchors the lipopolysaccharide to the outer membrane of the cell. In Nitrobacter hamburgensis (strain DSM 10229 / NCIMB 13809 / X14), this protein is UDP-3-O-acylglucosamine N-acyltransferase.